The primary structure comprises 95 residues: Small ribosomal subunit protein bS6 (95 aa).

The protein belongs to the bacterial ribosomal protein bS6 family.

Functionally, binds together with bS18 to 16S ribosomal RNA. The chain is Small ribosomal subunit protein bS6 from Exiguobacterium sp. (strain ATCC BAA-1283 / AT1b).